Consider the following 388-residue polypeptide: Succinate--CoA ligase [ADP-forming] subunit beta (388 aa).

The ATP-grasp domain occupies 9-244; it reads KEIFRSMGVA…LEEEDPKEIE (236 aa). Residues Lys-46, 53-55, Glu-99, Cys-102, and Glu-107 each bind ATP; that span reads GRG. Positions 199 and 213 each coordinate Mg(2+). Substrate-binding positions include Asn-264 and 321–323; that span reads GIM.

The protein belongs to the succinate/malate CoA ligase beta subunit family. Heterotetramer of two alpha and two beta subunits. Mg(2+) serves as cofactor.

The enzyme catalyses succinate + ATP + CoA = succinyl-CoA + ADP + phosphate. The catalysed reaction is GTP + succinate + CoA = succinyl-CoA + GDP + phosphate. It participates in carbohydrate metabolism; tricarboxylic acid cycle; succinate from succinyl-CoA (ligase route): step 1/1. Its function is as follows. Succinyl-CoA synthetase functions in the citric acid cycle (TCA), coupling the hydrolysis of succinyl-CoA to the synthesis of either ATP or GTP and thus represents the only step of substrate-level phosphorylation in the TCA. The beta subunit provides nucleotide specificity of the enzyme and binds the substrate succinate, while the binding sites for coenzyme A and phosphate are found in the alpha subunit. This Staphylococcus haemolyticus (strain JCSC1435) protein is Succinate--CoA ligase [ADP-forming] subunit beta.